Here is a 290-residue protein sequence, read N- to C-terminus: Enoyl-CoA hydratase, mitochondrial (290 aa).

Residues 1 to 27 constitute a mitochondrion transit peptide; it reads MAALRVLLSCVRGPLRPPVRCPAWRPF. Threonine 46 bears the Phosphothreonine mark. A substrate-binding site is contributed by 98 to 101; that stretch reads ADIK. Lysine 101 is modified (N6-acetyllysine; alternate). Residue lysine 101 is modified to N6-succinyllysine; alternate. Serine 114 bears the Phosphoserine mark. At lysine 115 the chain carries N6-acetyllysine; alternate. Residue lysine 115 is modified to N6-succinyllysine; alternate. Residue lysine 118 is modified to N6-acetyllysine. Glycine 141 contributes to the substrate binding site. An N6-succinyllysine modification is found at lysine 204. At lysine 211 the chain carries N6-acetyllysine.

It belongs to the enoyl-CoA hydratase/isomerase family. As to quaternary structure, homohexamer; dimer of trimers. In terms of tissue distribution, liver, fibroblast, muscle. Barely detectable in spleen and kidney.

The protein resides in the mitochondrion matrix. It carries out the reaction a (3S)-3-hydroxyacyl-CoA = a (2E)-enoyl-CoA + H2O. The enzyme catalyses a (3E)-enoyl-CoA = a 4-saturated (2E)-enoyl-CoA. The catalysed reaction is (3E)-hexenoyl-CoA = (2E)-hexenoyl-CoA. It catalyses the reaction (3S)-3-hydroxybutanoyl-CoA = (2E)-butenoyl-CoA + H2O. It carries out the reaction 3-hydroxyisovaleryl-CoA = 3-methylbut-2-enoyl-CoA + H2O. The enzyme catalyses 3-hydroxypropanoyl-CoA = acryloyl-CoA + H2O. The catalysed reaction is 3-hydroxybutanoyl-CoA = (2E)-butenoyl-CoA + H2O. It catalyses the reaction 2-methylpropenoyl-CoA + H2O = (S)-3-hydroxyisobutanoyl-CoA. It carries out the reaction (3S)-hydroxyhexanoyl-CoA = (2E)-hexenoyl-CoA + H2O. The enzyme catalyses (3S)-hydroxydecanoyl-CoA = (2E)-decenoyl-CoA + H2O. It functions in the pathway lipid metabolism; fatty acid beta-oxidation. Converts unsaturated trans-2-enoyl-CoA species ((2E)-enoyl-CoA) to the corresponding (3S)-3hydroxyacyl-CoA species through addition of a water molecule to the double bond. Catalyzes the hydration of medium- and short-chained fatty enoyl-CoA thioesters from 4 carbons long (C4) up to C16. Has high substrate specificity for crotonyl-CoA ((2E)-butenoyl-CoA) and moderate specificity for acryloyl-CoA, 3-methylcrotonyl-CoA (3-methyl-(2E)-butenoyl-CoA) and methacrylyl-CoA ((2E)-2-methylpropenoyl-CoA). Can bind tiglyl-CoA (2-methylcrotonoyl-CoA), but hydrates only a small amount of this substrate. Plays a key role in the beta-oxidation spiral of short- and medium-chain fatty acid oxidation. At a lower rate than the hydratase reaction, catalyzes the isomerase reaction of trans-3-enoyl-CoA species (such as (3E)-hexenoyl-CoA) to trans-2-enoyl-CoA species (such as (2E)-hexenoyl-CoA), which are subsequently hydrated to 3(S)-3-hydroxyacyl-CoA species (such as (3S)-hydroxyhexanoyl-CoA). This Homo sapiens (Human) protein is Enoyl-CoA hydratase, mitochondrial.